The following is a 182-amino-acid chain: Probable chorismate pyruvate-lyase (182 aa).

R81, L119, and E171 together coordinate substrate.

It belongs to the UbiC family.

The protein resides in the cytoplasm. It carries out the reaction chorismate = 4-hydroxybenzoate + pyruvate. It functions in the pathway cofactor biosynthesis; ubiquinone biosynthesis. In terms of biological role, removes the pyruvyl group from chorismate, with concomitant aromatization of the ring, to provide 4-hydroxybenzoate (4HB) for the ubiquinone pathway. In Pseudomonas putida (Arthrobacter siderocapsulatus), this protein is Probable chorismate pyruvate-lyase.